Consider the following 661-residue polypeptide: COBRA-like protein 7 (661 aa).

An N-terminal signal peptide occupies residues 1 to 26 (MDSAPNFIPRLLLLSLLIVSIPLTSS). Residues 26 to 45 (SQSDANTTNPSPSPPSDSDL) form a disordered region. 14 N-linked (GlcNAc...) asparagine glycosylation sites follow: asparagine 31, asparagine 64, asparagine 122, asparagine 170, asparagine 314, asparagine 327, asparagine 356, asparagine 369, asparagine 398, asparagine 410, asparagine 430, asparagine 472, asparagine 551, and asparagine 561. Serine 637 carries GPI-anchor amidated serine lipidation. A propeptide spans 638-661 (SQHRKHISVFLLALPVLALLILRA) (removed in mature form).

This sequence belongs to the COBRA family. As to expression, expressed in roots, stems, leaves, flowers and siliques.

Its subcellular location is the cell membrane. This Arabidopsis thaliana (Mouse-ear cress) protein is COBRA-like protein 7 (COBL7).